The following is a 429-amino-acid chain: Ribosomal RNA small subunit methyltransferase B (429 aa).

S-adenosyl-L-methionine is bound by residues 254–260 (CAAPGGK), aspartate 277, aspartate 303, and aspartate 322. The active-site Nucleophile is cysteine 375.

This sequence belongs to the class I-like SAM-binding methyltransferase superfamily. RsmB/NOP family.

It is found in the cytoplasm. The enzyme catalyses cytidine(967) in 16S rRNA + S-adenosyl-L-methionine = 5-methylcytidine(967) in 16S rRNA + S-adenosyl-L-homocysteine + H(+). Its function is as follows. Specifically methylates the cytosine at position 967 (m5C967) of 16S rRNA. The sequence is that of Ribosomal RNA small subunit methyltransferase B from Escherichia coli O17:K52:H18 (strain UMN026 / ExPEC).